The following is a 107-amino-acid chain: Urease subunit beta (107 aa).

This sequence belongs to the urease beta subunit family. As to quaternary structure, heterotrimer of UreA (gamma), UreB (beta) and UreC (alpha) subunits. Three heterotrimers associate to form the active enzyme.

It localises to the cytoplasm. It carries out the reaction urea + 2 H2O + H(+) = hydrogencarbonate + 2 NH4(+). The protein operates within nitrogen metabolism; urea degradation; CO(2) and NH(3) from urea (urease route): step 1/1. This chain is Urease subunit beta, found in Escherichia coli.